The sequence spans 115 residues: Nucleoid-associated protein Pro_0020 (115 aa).

The protein belongs to the YbaB/EbfC family. In terms of assembly, homodimer.

Its subcellular location is the cytoplasm. The protein localises to the nucleoid. Its function is as follows. Binds to DNA and alters its conformation. May be involved in regulation of gene expression, nucleoid organization and DNA protection. The protein is Nucleoid-associated protein Pro_0020 of Prochlorococcus marinus (strain SARG / CCMP1375 / SS120).